A 242-amino-acid chain; its full sequence is Biosynthetic peptidoglycan transglycosylase (242 aa).

Residues 19-39 (ILVVLAVFWGGGIALFSVVPV) form a helical membrane-spanning segment.

It belongs to the glycosyltransferase 51 family.

It localises to the cell inner membrane. The enzyme catalyses [GlcNAc-(1-&gt;4)-Mur2Ac(oyl-L-Ala-gamma-D-Glu-L-Lys-D-Ala-D-Ala)](n)-di-trans,octa-cis-undecaprenyl diphosphate + beta-D-GlcNAc-(1-&gt;4)-Mur2Ac(oyl-L-Ala-gamma-D-Glu-L-Lys-D-Ala-D-Ala)-di-trans,octa-cis-undecaprenyl diphosphate = [GlcNAc-(1-&gt;4)-Mur2Ac(oyl-L-Ala-gamma-D-Glu-L-Lys-D-Ala-D-Ala)](n+1)-di-trans,octa-cis-undecaprenyl diphosphate + di-trans,octa-cis-undecaprenyl diphosphate + H(+). It participates in cell wall biogenesis; peptidoglycan biosynthesis. Functionally, peptidoglycan polymerase that catalyzes glycan chain elongation from lipid-linked precursors. The sequence is that of Biosynthetic peptidoglycan transglycosylase from Citrobacter koseri (strain ATCC BAA-895 / CDC 4225-83 / SGSC4696).